Reading from the N-terminus, the 257-residue chain is Aspartate/glutamate leucyltransferase (257 aa).

It belongs to the R-transferase family. Bpt subfamily.

The protein resides in the cytoplasm. It carries out the reaction N-terminal L-glutamyl-[protein] + L-leucyl-tRNA(Leu) = N-terminal L-leucyl-L-glutamyl-[protein] + tRNA(Leu) + H(+). The enzyme catalyses N-terminal L-aspartyl-[protein] + L-leucyl-tRNA(Leu) = N-terminal L-leucyl-L-aspartyl-[protein] + tRNA(Leu) + H(+). Its function is as follows. Functions in the N-end rule pathway of protein degradation where it conjugates Leu from its aminoacyl-tRNA to the N-termini of proteins containing an N-terminal aspartate or glutamate. The protein is Aspartate/glutamate leucyltransferase of Rhodopseudomonas palustris (strain HaA2).